The primary structure comprises 250 residues: Triosephosphate isomerase (250 aa).

Residue Asn-9–Lys-11 coordinates substrate. The active-site Electrophile is the His-95. Catalysis depends on Glu-167, which acts as the Proton acceptor. Residues Gly-173, Ser-213, and Gly-234 to Gly-235 contribute to the substrate site.

Belongs to the triosephosphate isomerase family. As to quaternary structure, homodimer.

It localises to the cytoplasm. The enzyme catalyses D-glyceraldehyde 3-phosphate = dihydroxyacetone phosphate. The protein operates within carbohydrate biosynthesis; gluconeogenesis. Its pathway is carbohydrate degradation; glycolysis; D-glyceraldehyde 3-phosphate from glycerone phosphate: step 1/1. Functionally, involved in the gluconeogenesis. Catalyzes stereospecifically the conversion of dihydroxyacetone phosphate (DHAP) to D-glyceraldehyde-3-phosphate (G3P). The chain is Triosephosphate isomerase from Herpetosiphon aurantiacus (strain ATCC 23779 / DSM 785 / 114-95).